The chain runs to 812 residues: Phenylalanine--tRNA ligase beta subunit (812 aa).

A tRNA-binding domain is found at 39-155; it reads SKTFAPFTIA…ADAPVGAGYA (117 aa). Residues 405–480 form the B5 domain; it reads PEDRVIDFPL…RIVGVDKVPM (76 aa). Residues Asp-458, Asp-464, Glu-467, and Glu-468 each contribute to the Mg(2+) site. Positions 718–811 constitute an FDX-ACB domain; that stretch reads PAFQPVSRDF…VAKRTGGSLR (94 aa).

This sequence belongs to the phenylalanyl-tRNA synthetase beta subunit family. Type 1 subfamily. As to quaternary structure, tetramer of two alpha and two beta subunits. Mg(2+) serves as cofactor.

It is found in the cytoplasm. The catalysed reaction is tRNA(Phe) + L-phenylalanine + ATP = L-phenylalanyl-tRNA(Phe) + AMP + diphosphate + H(+). This Nitrobacter winogradskyi (strain ATCC 25391 / DSM 10237 / CIP 104748 / NCIMB 11846 / Nb-255) protein is Phenylalanine--tRNA ligase beta subunit.